A 786-amino-acid polypeptide reads, in one-letter code: Endonuclease MutS2 (786 aa).

An ATP-binding site is contributed by G332–T339. Residues V711 to K786 form the Smr domain.

It belongs to the DNA mismatch repair MutS family. MutS2 subfamily. In terms of assembly, homodimer. Binds to stalled ribosomes, contacting rRNA.

Endonuclease that is involved in the suppression of homologous recombination and thus may have a key role in the control of bacterial genetic diversity. Functionally, acts as a ribosome collision sensor, splitting the ribosome into its 2 subunits. Detects stalled/collided 70S ribosomes which it binds and splits by an ATP-hydrolysis driven conformational change. Acts upstream of the ribosome quality control system (RQC), a ribosome-associated complex that mediates the extraction of incompletely synthesized nascent chains from stalled ribosomes and their subsequent degradation. Probably generates substrates for RQC. The sequence is that of Endonuclease MutS2 from Clostridium kluyveri (strain NBRC 12016).